The primary structure comprises 149 residues: SsrA-binding protein (149 aa).

This sequence belongs to the SmpB family.

It is found in the cytoplasm. Its function is as follows. Required for rescue of stalled ribosomes mediated by trans-translation. Binds to transfer-messenger RNA (tmRNA), required for stable association of tmRNA with ribosomes. tmRNA and SmpB together mimic tRNA shape, replacing the anticodon stem-loop with SmpB. tmRNA is encoded by the ssrA gene; the 2 termini fold to resemble tRNA(Ala) and it encodes a 'tag peptide', a short internal open reading frame. During trans-translation Ala-aminoacylated tmRNA acts like a tRNA, entering the A-site of stalled ribosomes, displacing the stalled mRNA. The ribosome then switches to translate the ORF on the tmRNA; the nascent peptide is terminated with the 'tag peptide' encoded by the tmRNA and targeted for degradation. The ribosome is freed to recommence translation, which seems to be the essential function of trans-translation. This is SsrA-binding protein from Thermosipho africanus (strain TCF52B).